The sequence spans 469 residues: Alpha-galactosidase (469 aa).

A signal peptide spans M1–A17. The cysteines at positions 41 and 73 are disulfide-linked. 2 residues coordinate substrate: D71 and D72. N81 is a glycosylation site (N-linked (GlcNAc...) asparagine). An intrachain disulfide couples C120 to C150. K146 serves as a coordination point for substrate. Residue D148 is the Nucleophile of the active site. The N-linked (GlcNAc...) asparagine glycan is linked to N174. R204 is a substrate binding site. D208 acts as the Proton donor in catalysis. 2 disulfides stabilise this stretch: C220–C236 and C222–C229. Q250 provides a ligand contact to substrate. N-linked (GlcNAc...) asparagine glycosylation is found at N269, N369, N402, N412, N421, N426, and N434.

Belongs to the glycosyl hydrolase 27 family. Homotetramer.

Its subcellular location is the secreted. It catalyses the reaction Hydrolysis of terminal, non-reducing alpha-D-galactose residues in alpha-D-galactosides, including galactose oligosaccharides, galactomannans and galactolipids.. The protein is Alpha-galactosidase (MEL) of Lachancea cidri (Yeast).